The primary structure comprises 130 residues: Large ribosomal subunit protein bL20c (130 aa).

The protein belongs to the bacterial ribosomal protein bL20 family.

It localises to the plastid. Its subcellular location is the chloroplast. Binds directly to 23S ribosomal RNA and is necessary for the in vitro assembly process of the 50S ribosomal subunit. It is not involved in the protein synthesizing functions of that subunit. The protein is Large ribosomal subunit protein bL20c (rpl20) of Glycine max (Soybean).